A 256-amino-acid polypeptide reads, in one-letter code: Triosephosphate isomerase (256 aa).

Position 12–14 (12–14) interacts with substrate; the sequence is NWK. H99 functions as the Electrophile in the catalytic mechanism. E171 acts as the Proton acceptor in catalysis. Substrate-binding positions include G177, S217, and 238-239; that span reads GG.

It belongs to the triosephosphate isomerase family. In terms of assembly, homodimer.

The protein resides in the cytoplasm. It catalyses the reaction D-glyceraldehyde 3-phosphate = dihydroxyacetone phosphate. It functions in the pathway carbohydrate biosynthesis; gluconeogenesis. It participates in carbohydrate degradation; glycolysis; D-glyceraldehyde 3-phosphate from glycerone phosphate: step 1/1. Involved in the gluconeogenesis. Catalyzes stereospecifically the conversion of dihydroxyacetone phosphate (DHAP) to D-glyceraldehyde-3-phosphate (G3P). The sequence is that of Triosephosphate isomerase from Rubrobacter xylanophilus (strain DSM 9941 / JCM 11954 / NBRC 16129 / PRD-1).